An 85-amino-acid polypeptide reads, in one-letter code: MKVAIVFLSLLVLAFASESIEENREEFPVEESARCGDINAPCQSDCDCCGYSVTCDCYWSSSCKCRESLFPLGMALRKAFCQNKI.

An N-terminal signal peptide occupies residues 1-16 (MKVAIVFLSLLVLAFA). The propeptide occupies 17 to 34 (SESIEENREEFPVEESAR). 5 disulfide bridges follow: Cys-35/Cys-49, Cys-42/Cys-55, Cys-46/Cys-81, Cys-48/Cys-65, and Cys-57/Cys-63. Residues 82–85 (QNKI) constitute a propeptide that is removed on maturation.

Belongs to the neurotoxin 03 (Tx2) family. 05 subfamily. In terms of tissue distribution, expressed by the venom gland.

It localises to the secreted. Functionally, insecticidal neurotoxin that reversibly inhibits the N-methyl-D-aspartate (NMDA)-subtype of ionotropic glutamate receptor (GRIN) and inhibits inactivation of insect sodium channels (Nav). In vivo, is highly toxic to insects. The chain is U1-ctenitoxin-Pn1a from Phoneutria nigriventer (Brazilian armed spider).